The sequence spans 374 residues: MYLANFELKDFRNFEELKINFDPHVNIFIGPNAQGKTNLLEAIYFLALTRSHRTNSDKELIRFGSKFAGLQGKVHKSQLEVELKLRLTPNGKKAWVNRLEQKKLSAYVGQMNAILFSPEDLALVKGAPSIRRRFMDLEFGQINSEYLYFLSQYRQVLQQRNNYLKQLSIKKANDLVFLDVLSDQLAGIAAEIISRRIKYIKKLNSYAQSAHSEISGQAEKLQIFYRPSVKEITPDDDVETIYQKVITSYKKNRPNEIRKGTTLSGPHRDDLDFLINDKNAHDFASQGQQRTISLSVKLAEIQLVHELTQEYPILLLDDVMSELDHRRQSSLLNYIHGKTQTFITTTDLEGISWEIVKEPKVYHISAGTISTKES.

Position 30 to 37 (30 to 37) interacts with ATP; sequence GPNAQGKT.

The protein belongs to the RecF family.

It localises to the cytoplasm. The RecF protein is involved in DNA metabolism; it is required for DNA replication and normal SOS inducibility. RecF binds preferentially to single-stranded, linear DNA. It also seems to bind ATP. In Lactobacillus johnsonii (strain CNCM I-12250 / La1 / NCC 533), this protein is DNA replication and repair protein RecF.